A 182-amino-acid chain; its full sequence is CASP-like protein 5A1 (182 aa).

Residues 1-47 (MEMASHPAVHPVALPPPYQAVGPPAPPAVRINDFPGSPGTLMGLALR) are Cytoplasmic-facing. A helical membrane pass occupies residues 48–68 (FAQLGFALTALCIMVSIVGFS). Over 69–72 (SVTA) the chain is Extracellular. Residues 73-93 (FCFLVAAMVLQCIWSLCLGVL) form a helical membrane-spanning segment. At 94–117 (DCYALLTKRSLRNSLILSFFVVGD) the chain is on the cytoplasmic side. A helical membrane pass occupies residues 118 to 138 (WITSTMTFAGACAAAGITVLI). Topologically, residues 139–158 (DNDLNQCGPNHCNRFEAAAA) are extracellular. A helical transmembrane segment spans residues 159-179 (MAFMSWVITTISFFLSFWILV). Residues 180 to 182 (TCR) are Cytoplasmic-facing.

This sequence belongs to the Casparian strip membrane proteins (CASP) family. In terms of assembly, homodimer and heterodimers.

It is found in the cell membrane. This is CASP-like protein 5A1 from Physcomitrium patens (Spreading-leaved earth moss).